The following is a 208-amino-acid chain: Mediator of RNA polymerase II transcription subunit 18 (208 aa).

The protein belongs to the Mediator complex subunit 18 family. In terms of assembly, component of the Mediator complex.

The protein resides in the nucleus. Component of the Mediator complex, a coactivator involved in the regulated transcription of nearly all RNA polymerase II-dependent genes. Mediator functions as a bridge to convey information from gene-specific regulatory proteins to the basal RNA polymerase II transcription machinery. Mediator is recruited to promoters by direct interactions with regulatory proteins and serves as a scaffold for the assembly of a functional preinitiation complex with RNA polymerase II and the general transcription factors. The sequence is that of Mediator of RNA polymerase II transcription subunit 18 (med18) from Xenopus tropicalis (Western clawed frog).